A 146-amino-acid polypeptide reads, in one-letter code: Hemoglobin subunit delta (146 aa).

Residues 2-146 form the Globin domain; sequence HLTGEEKSAV…VATALAHKYH (145 aa). The residue at position 50 (S50) is a Phosphoserine. The heme b site is built by H63 and H92.

Belongs to the globin family. As to quaternary structure, heterotetramer of two delta chains and two alpha chains. As to expression, red blood cells.

This chain is Hemoglobin subunit delta (HBD), found in Leontocebus nigricollis (Black-mantled tamarin).